Reading from the N-terminus, the 67-residue chain is MSLFPVIVVFGLSFPPIFFELLLSLAIFWLVCRVLVPTGIYDFVWHPALFNTALYCCLFYLISRLFV.

2 helical membrane-spanning segments follow: residues 3–23 (LFPV…ELLL) and 47–67 (PALF…RLFV).

It belongs to the AaeX family.

It localises to the cell membrane. This Escherichia coli O157:H7 protein is Protein AaeX.